The primary structure comprises 444 residues: N-succinylarginine dihydrolase (444 aa).

Residues 19–28 (SGLSVGNIAS), asparagine 110, and 137–138 (HR) contribute to the substrate site. Glutamate 174 is an active-site residue. Substrate is bound at residue arginine 214. Histidine 250 is a catalytic residue. Substrate is bound by residues aspartate 252 and asparagine 362. Cysteine 368 functions as the Nucleophile in the catalytic mechanism.

It belongs to the succinylarginine dihydrolase family. In terms of assembly, homodimer.

The enzyme catalyses N(2)-succinyl-L-arginine + 2 H2O + 2 H(+) = N(2)-succinyl-L-ornithine + 2 NH4(+) + CO2. It functions in the pathway amino-acid degradation; L-arginine degradation via AST pathway; L-glutamate and succinate from L-arginine: step 2/5. Functionally, catalyzes the hydrolysis of N(2)-succinylarginine into N(2)-succinylornithine, ammonia and CO(2). This is N-succinylarginine dihydrolase from Aliivibrio fischeri (strain MJ11) (Vibrio fischeri).